Reading from the N-terminus, the 489-residue chain is Glucose-6-phosphate isomerase (489 aa).

Glutamate 309 serves as the catalytic Proton donor. Catalysis depends on residues histidine 340 and lysine 459.

Belongs to the GPI family.

It is found in the cytoplasm. The enzyme catalyses alpha-D-glucose 6-phosphate = beta-D-fructose 6-phosphate. It participates in carbohydrate biosynthesis; gluconeogenesis. Its pathway is carbohydrate degradation; glycolysis; D-glyceraldehyde 3-phosphate and glycerone phosphate from D-glucose: step 2/4. Catalyzes the reversible isomerization of glucose-6-phosphate to fructose-6-phosphate. The sequence is that of Glucose-6-phosphate isomerase from Idiomarina loihiensis (strain ATCC BAA-735 / DSM 15497 / L2-TR).